We begin with the raw amino-acid sequence, 287 residues long: Putative DNA-3-methyladenine glycosylase YfjP (287 aa).

The active-site Proton acceptor is the aspartate 242.

Belongs to the alkylbase DNA glycosidase AlkA family.

It carries out the reaction Hydrolysis of alkylated DNA, releasing 3-methyladenine, 3-methylguanine, 7-methylguanine and 7-methyladenine.. Functionally, hydrolysis of the deoxyribose N-glycosidic bond to excise 3-methyladenine, 3-methylguanine, 7-methylguanine, O2-methylthymine, and O2-methylcytosine from the damaged DNA polymer formed by alkylation lesions. The polypeptide is Putative DNA-3-methyladenine glycosylase YfjP (yfjP) (Bacillus subtilis (strain 168)).